The primary structure comprises 148 residues: [Ribosomal protein bS18]-alanine N-acetyltransferase (148 aa).

Residues 2–147 (NTISSLETTD…DAIIMALPIS (146 aa)) form the N-acetyltransferase domain. An acetyl-CoA-binding site is contributed by 69-71 (IAV). The active-site Proton acceptor is Glu103. Asn108 lines the acetyl-CoA pocket. Tyr115 acts as the Proton donor in catalysis.

It belongs to the acetyltransferase family. RimI subfamily.

The protein localises to the cytoplasm. The enzyme catalyses N-terminal L-alanyl-[ribosomal protein bS18] + acetyl-CoA = N-terminal N(alpha)-acetyl-L-alanyl-[ribosomal protein bS18] + CoA + H(+). Acetylates the N-terminal alanine of ribosomal protein bS18. This Escherichia coli O157:H7 protein is [Ribosomal protein bS18]-alanine N-acetyltransferase.